The sequence spans 399 residues: uncharacterized protein (399 aa).

Belongs to the TelA family.

This is an uncharacterized protein from Listeria monocytogenes serovar 1/2a (strain ATCC BAA-679 / EGD-e).